Reading from the N-terminus, the 241-residue chain is Octanoyltransferase (241 aa).

Positions Gly-49–Glu-233 constitute a BPL/LPL catalytic domain. Substrate is bound by residues Arg-87–His-94, Ala-162–Gly-164, and Gly-175–Ser-177. Cys-193 acts as the Acyl-thioester intermediate in catalysis.

This sequence belongs to the LipB family.

The protein resides in the cytoplasm. It catalyses the reaction octanoyl-[ACP] + L-lysyl-[protein] = N(6)-octanoyl-L-lysyl-[protein] + holo-[ACP] + H(+). It functions in the pathway protein modification; protein lipoylation via endogenous pathway; protein N(6)-(lipoyl)lysine from octanoyl-[acyl-carrier-protein]: step 1/2. Its function is as follows. Catalyzes the transfer of endogenously produced octanoic acid from octanoyl-acyl-carrier-protein onto the lipoyl domains of lipoate-dependent enzymes. Lipoyl-ACP can also act as a substrate although octanoyl-ACP is likely to be the physiological substrate. This chain is Octanoyltransferase, found in Nitrobacter hamburgensis (strain DSM 10229 / NCIMB 13809 / X14).